A 2153-amino-acid polypeptide reads, in one-letter code: RNA-directed RNA polymerase L (2153 aa).

Residues His36, Glu54, Asp97, Glu110, and Val111 each coordinate Mn(2+). Lys124 acts as the For endonuclease activity in catalysis. Positions 957-1143 (TGNVIKFKRR…AVNQEMWKSM (187 aa)) constitute a RdRp catalytic domain. A Mg(2+)-binding site is contributed by Asp1100. The tract at residues 1291-2153 (KQAFYSYKHT…FPHDPVSSFY (863 aa)) is interaction with the viral nucleoprotein.

The protein belongs to the Bunyavirales RNA polymerase family. Interacts with the viral nucleoprotein; this interaction is required for RdRp function. Requires Mn(2+) as cofactor. Mg(2+) is required as a cofactor.

The protein resides in the host cytoplasm. It localises to the host perinuclear region. The catalysed reaction is RNA(n) + a ribonucleoside 5'-triphosphate = RNA(n+1) + diphosphate. Its function is as follows. RNA-dependent RNA polymerase, which is responsible for the replication and transcription of the viral RNA genome using antigenomic RNA as an intermediate. During transcription, synthesizes subgenomic RNAs and assures their capping by a cap-snatching mechanism, which involves the endonuclease activity cleaving the host capped pre-mRNAs. These short capped RNAs are then used as primers for viral transcription. Cleaves ssRNA substrates but not DNA. Seems to downregulate the expression of its own and heterologous mRNAs through its endonuclease activity. This is RNA-directed RNA polymerase L from Sin Nombre orthohantavirus (SNV).